Consider the following 475-residue polypeptide: Sulfate adenylyltransferase subunit 1 (475 aa).

Positions 25–239 (KSLLRFLTCG…EVLETVEIQR (215 aa)) constitute a tr-type G domain. The G1 stretch occupies residues 34-41 (GSVDDGKS). 34-41 (GSVDDGKS) lines the GTP pocket. Positions 92–96 (GITID) are G2. The G3 stretch occupies residues 113–116 (DTPG). GTP-binding positions include 113-117 (DTPGH) and 168-171 (NKMD). The G4 stretch occupies residues 168-171 (NKMD). The interval 206–208 (SAL) is G5.

The protein belongs to the TRAFAC class translation factor GTPase superfamily. Classic translation factor GTPase family. CysN/NodQ subfamily. Heterodimer composed of CysD, the smaller subunit, and CysN.

It catalyses the reaction sulfate + ATP + H(+) = adenosine 5'-phosphosulfate + diphosphate. Its pathway is sulfur metabolism; hydrogen sulfide biosynthesis; sulfite from sulfate: step 1/3. With CysD forms the ATP sulfurylase (ATPS) that catalyzes the adenylation of sulfate producing adenosine 5'-phosphosulfate (APS) and diphosphate, the first enzymatic step in sulfur assimilation pathway. APS synthesis involves the formation of a high-energy phosphoric-sulfuric acid anhydride bond driven by GTP hydrolysis by CysN coupled to ATP hydrolysis by CysD. The sequence is that of Sulfate adenylyltransferase subunit 1 from Escherichia coli O17:K52:H18 (strain UMN026 / ExPEC).